The chain runs to 62 residues: Large ribosomal subunit protein eL37 (62 aa).

4 residues coordinate Zn(2+): Cys-20, Cys-23, Cys-35, and Cys-38. The C4-type zinc-finger motif lies at 20–38 (CRRCGRRAYHVRKGYCAAC).

This sequence belongs to the eukaryotic ribosomal protein eL37 family. Requires Zn(2+) as cofactor.

Binds to the 23S rRNA. In Methanopyrus kandleri (strain AV19 / DSM 6324 / JCM 9639 / NBRC 100938), this protein is Large ribosomal subunit protein eL37.